Consider the following 20-residue polypeptide: DDIKLSQQYDVLDLFKYMHQ.

It belongs to the G-protein coupled receptor 1 family.

Its subcellular location is the cell membrane. In terms of biological role, putative receptor for octopamine. Octopamine (OA) is a neurotransmitter, neurohormone, and neuromodulator in invertebrates. The activity of this receptor is mediated by G proteins which activate adenylyl cyclase. In Photinus pyralis (Common eastern firefly), this protein is Octopamine receptor.